Reading from the N-terminus, the 420-residue chain is ATP phosphoribosyltransferase regulatory subunit (420 aa).

The protein belongs to the class-II aminoacyl-tRNA synthetase family. HisZ subfamily. In terms of assembly, heteromultimer composed of HisG and HisZ subunits.

Its subcellular location is the cytoplasm. The protein operates within amino-acid biosynthesis; L-histidine biosynthesis; L-histidine from 5-phospho-alpha-D-ribose 1-diphosphate: step 1/9. Functionally, required for the first step of histidine biosynthesis. May allow the feedback regulation of ATP phosphoribosyltransferase activity by histidine. The sequence is that of ATP phosphoribosyltransferase regulatory subunit from Bacillus cereus (strain G9842).